Consider the following 316-residue polypeptide: D-alanine--D-alanine ligase (316 aa).

Residues 107 to 303 form the ATP-grasp domain; it reads KEVFAARGLT…FEDLVERILI (197 aa). 133 to 188 is an ATP binding site; sequence AEGFGYPVVVKPSQEGSSVGVSIVKSPEELPSALELAFRYDDDILVERFIKGREIQ. Asp-256, Glu-269, and Asn-271 together coordinate Mg(2+).

The protein belongs to the D-alanine--D-alanine ligase family. It depends on Mg(2+) as a cofactor. Mn(2+) is required as a cofactor.

The protein resides in the cytoplasm. It carries out the reaction 2 D-alanine + ATP = D-alanyl-D-alanine + ADP + phosphate + H(+). It functions in the pathway cell wall biogenesis; peptidoglycan biosynthesis. In terms of biological role, cell wall formation. This Geobacter sulfurreducens (strain ATCC 51573 / DSM 12127 / PCA) protein is D-alanine--D-alanine ligase.